Reading from the N-terminus, the 208-residue chain is Protein-L-isoaspartate O-methyltransferase (208 aa).

Residue serine 59 is part of the active site.

It belongs to the methyltransferase superfamily. L-isoaspartyl/D-aspartyl protein methyltransferase family.

Its subcellular location is the cytoplasm. It catalyses the reaction [protein]-L-isoaspartate + S-adenosyl-L-methionine = [protein]-L-isoaspartate alpha-methyl ester + S-adenosyl-L-homocysteine. In terms of biological role, catalyzes the methyl esterification of L-isoaspartyl residues in peptides and proteins that result from spontaneous decomposition of normal L-aspartyl and L-asparaginyl residues. It plays a role in the repair and/or degradation of damaged proteins. This is Protein-L-isoaspartate O-methyltransferase from Pectobacterium atrosepticum (strain SCRI 1043 / ATCC BAA-672) (Erwinia carotovora subsp. atroseptica).